A 687-amino-acid chain; its full sequence is Dentin sialophosphoprotein (687 aa).

The N-terminal stretch at 1 to 17 (MKTKIIIYICIWATAWA) is a signal peptide. The segment at 54–113 (NNATNDDSPKGSELGRQVHSNGGYERDRNGSESIAVGGKSSPTQPILANAQGNSAKERED) is disordered. Asparagine 55 carries N-linked (GlcNAc...) asparagine glycosylation. Residue threonine 57 is modified to Phosphothreonine; by CK2. N-linked (GlcNAc...) asparagine glycosylation is present at asparagine 82. Residues 93–107 (SSPTQPILANAQGNS) show a composition bias toward polar residues. Asparagine 128 carries N-linked (GlcNAc...) asparagine glycosylation. Positions 146–160 (EAKESKVHGQPHQDT) are enriched in basic and acidic residues. Residues 146 to 687 (EAKESKVHGQ…SDSNHSTSDD (542 aa)) form a disordered region. A compositionally biased stretch (polar residues) spans 161-194 (KTGLASDTSQNGDATLVQENEPQVAGSKNSTNHE). Asparagine 189 carries N-linked (GlcNAc...) asparagine glycosylation. Position 226 is a phosphoserine; by CK2 (serine 226). A Phosphoserine; by CK1 modification is found at serine 253. The span at 262–275 (GDGRESHDGTEGHE) shows a compositional bias: basic and acidic residues. A compositionally biased stretch (polar residues) spans 276 to 292 (GQSSGGNNDNRGQGSVS). Position 278 is a phosphoserine; by CK1 (serine 278). At serine 292 the chain carries Phosphoserine; by CK2. Serine 298 bears the Phosphoserine; by CK1 mark. Asparagine 312 carries an N-linked (GlcNAc...) asparagine glycan. At serine 315 the chain carries Phosphoserine; by CK2. A phosphothreonine; by CK2 mark is found at threonine 319 and threonine 329. 2 positions are modified to phosphoserine; by CK2: serine 337 and serine 345. A compositionally biased stretch (polar residues) spans 352–375 (SGQSQNQGLETEGSSTGNKSSITK). Phosphoserine; by CK1 is present on serine 366. Asparagine 369 carries an N-linked (GlcNAc...) asparagine glycan. Residues 386 to 417 (SNGHHGMELDKRNSPKQGESDKPQGAAEKSDT) are compositionally biased toward basic and acidic residues. The span at 418–432 (HNNMGHSRIGSSSNS) shows a compositional bias: polar residues. The span at 447–460 (GDDPNSSDESNGSD) shows a compositional bias: low complexity. A compositionally biased stretch (acidic residues) spans 500-521 (DDSSDDTSDTDDSDSNGDDDSE). The segment covering 522–545 (SKDKDESDNSNHDNDSDSESKSDS) has biased composition (basic and acidic residues). Over residues 555-598 (SSDSSDSSDSSETSDSSDSSDTSDSSDSSDSSDSSNSSDTSDSS) the composition is skewed to low complexity. Acidic residues predominate over residues 599-617 (DSSDGDSSDGDSSDSDSSD). The segment covering 618–639 (SDSSNSSDSDSSDSSDSSSSDS) has biased composition (low complexity). A compositionally biased stretch (acidic residues) spans 667–677 (SDSDSDSDSEG). The segment covering 678–687 (SDSNHSTSDD) has biased composition (low complexity).

As to quaternary structure, interacts with FBLN7. DSP is glycosylated. Specifically expressed in teeth, mainly in odontoblasts and transiently in pre-ameloblasts.

The protein resides in the secreted. It is found in the extracellular space. The protein localises to the extracellular matrix. In terms of biological role, DSP may be an important factor in dentinogenesis. DPP may bind high amount of calcium and facilitate initial mineralization of dentin matrix collagen as well as regulate the size and shape of the crystals. The polypeptide is Dentin sialophosphoprotein (Dspp) (Rattus norvegicus (Rat)).